Reading from the N-terminus, the 64-residue chain is Mitotic-spindle organizing protein 1 (64 aa).

It belongs to the MOZART1 family. In terms of assembly, part of the gamma-tubulin complex. Interacts directly with alp6/GPC3.

Its subcellular location is the cytoplasm. The protein localises to the cytoskeleton. The protein resides in the microtubule organizing center. It is found in the spindle pole body. Functionally, required for gamma-tubulin complex recruitment to the microtubule organizing center (MTOC). The chain is Mitotic-spindle organizing protein 1 (mzt1) from Schizosaccharomyces pombe (strain 972 / ATCC 24843) (Fission yeast).